The chain runs to 358 residues: MAGAVSLWRREAVFLTAMLAGETSIVGLSTLFKVATSKGLNIYPFLSYSYLLASLLLLPSLFFTNRSRSLPPLSASILSKIGLLGFLGSMYVITGGIGIEYSNPTLASAIGNIVPALTFILAVIFRMEKVSFKERSSVAKVMGTILSLIGAFVVIFYHGPRVFVASSPPYLNFRQLSPPLSSSKSDWLIGGAILTIQGIFVSVSFILQTHIMREYPEAFTVSILYILCISIVTSMIGLVVEKNNPSIWIIHFDITLFTIVTTGIITSVYYVIHSWAIRHKRPLYLAIFKPLSILIAVVMGTIFLNDSLYLGCLIGGILITLGFYVVMWGKANEEKNKLLSFSGKEKTPLLLSGKNDQI.

10 consecutive transmembrane segments (helical) span residues 12-32 (AVFL…STLF), 42-62 (IYPF…PSLF), 81-101 (IGLL…GIEY), 105-125 (TLAS…AVIF), 137-157 (SVAK…VIFY), 187-207 (WLIG…SFIL), 219-239 (FTVS…IGLV), 245-265 (PSIW…TGII), 283-303 (LYLA…GTIF), and 308-328 (LYLG…VVMW). The region spanning 27–155 (GLSTLFKVAT…LSLIGAFVVI (129 aa)) is the EamA domain.

It belongs to the drug/metabolite transporter (DMT) superfamily. Plant drug/metabolite exporter (P-DME) (TC 2.A.7.4) family.

The protein localises to the membrane. The polypeptide is WAT1-related protein At3g28080 (Arabidopsis thaliana (Mouse-ear cress)).